We begin with the raw amino-acid sequence, 176 residues long: Peptide methionine sulfoxide reductase MsrA (176 aa).

The active site involves Cys-10.

The protein belongs to the MsrA Met sulfoxide reductase family.

It catalyses the reaction L-methionyl-[protein] + [thioredoxin]-disulfide + H2O = L-methionyl-(S)-S-oxide-[protein] + [thioredoxin]-dithiol. The catalysed reaction is [thioredoxin]-disulfide + L-methionine + H2O = L-methionine (S)-S-oxide + [thioredoxin]-dithiol. Has an important function as a repair enzyme for proteins that have been inactivated by oxidation. Catalyzes the reversible oxidation-reduction of methionine sulfoxide in proteins to methionine. The polypeptide is Peptide methionine sulfoxide reductase MsrA (Chromobacterium violaceum (strain ATCC 12472 / DSM 30191 / JCM 1249 / CCUG 213 / NBRC 12614 / NCIMB 9131 / NCTC 9757 / MK)).